Reading from the N-terminus, the 573-residue chain is Sulfite reductase [NADPH] hemoprotein beta-component (573 aa).

The [4Fe-4S] cluster site is built by Cys436, Cys442, Cys481, and Cys485. Position 485 (Cys485) interacts with siroheme.

This sequence belongs to the nitrite and sulfite reductase 4Fe-4S domain family. Alpha(8)-beta(8). The alpha component is a flavoprotein, the beta component is a hemoprotein. Requires siroheme as cofactor. It depends on [4Fe-4S] cluster as a cofactor.

It catalyses the reaction hydrogen sulfide + 3 NADP(+) + 3 H2O = sulfite + 3 NADPH + 4 H(+). The protein operates within sulfur metabolism; hydrogen sulfide biosynthesis; hydrogen sulfide from sulfite (NADPH route): step 1/1. In terms of biological role, component of the sulfite reductase complex that catalyzes the 6-electron reduction of sulfite to sulfide. This is one of several activities required for the biosynthesis of L-cysteine from sulfate. The chain is Sulfite reductase [NADPH] hemoprotein beta-component from Alteromonas mediterranea (strain DSM 17117 / CIP 110805 / LMG 28347 / Deep ecotype).